We begin with the raw amino-acid sequence, 420 residues long: Dynein axonemal assembly factor 4 (420 aa).

The CS domain maps to 3 to 87; sequence LQVSDYSWQQ…KEAAMWETLS (85 aa). A mediates interaction with ESR1 and STUB1 region spans residues 7–103; sequence DYSWQQTKTA…ETMQRIREKS (97 aa). TPR repeat units follow at residues 290 to 323, 324 to 357, and 366 to 399; these read PEWLKDKGNKLFATENYLAAINAYNLAIRLNNKM, PLLYLNRAACHLKLKNLHKAIEDSSKALELLMPP, and MKAHVRRGTAFCQLELYVEGLQDYEAALKIDPSN.

In terms of assembly, interacts with ZMYND10. Interacts with STUB1. Interacts with ESR1 and ESR2. Interacts with DNAAF2. Interacts with CCT3, CCT4, CCT5 and CCT8. Interacts with DNAAF6/PIH1D3.

It localises to the nucleus. The protein localises to the cytoplasm. It is found in the cell projection. Its subcellular location is the neuron projection. The protein resides in the dynein axonemal particle. Its function is as follows. Involved in neuronal migration during development of the cerebral neocortex. May regulate the stability and proteasomal degradation of the estrogen receptors that play an important role in neuronal differentiation, survival and plasticity. Axonemal dynein assembly factor required for ciliary motility. The sequence is that of Dynein axonemal assembly factor 4 from Pongo pygmaeus (Bornean orangutan).